A 418-amino-acid polypeptide reads, in one-letter code: 3-isopropylmalate dehydratase large subunit (418 aa).

Residues cysteine 299, cysteine 359, and cysteine 362 each contribute to the [4Fe-4S] cluster site.

It belongs to the aconitase/IPM isomerase family. LeuC type 2 subfamily. In terms of assembly, heterodimer of LeuC and LeuD. [4Fe-4S] cluster serves as cofactor.

It catalyses the reaction (2R,3S)-3-isopropylmalate = (2S)-2-isopropylmalate. Its pathway is amino-acid biosynthesis; L-leucine biosynthesis; L-leucine from 3-methyl-2-oxobutanoate: step 2/4. Catalyzes the isomerization between 2-isopropylmalate and 3-isopropylmalate, via the formation of 2-isopropylmaleate. The sequence is that of 3-isopropylmalate dehydratase large subunit from Oleidesulfovibrio alaskensis (strain ATCC BAA-1058 / DSM 17464 / G20) (Desulfovibrio alaskensis).